The chain runs to 442 residues: Cyclic AMP receptor-like protein B (442 aa).

Residues 1-16 (MGGDIHLCSMILGKNH) are Extracellular-facing. The helical transmembrane segment at 17-37 (LIFLYFANLFGSTLSFLATII) threads the bilayer. Over 38-219 (TIVFYLVKKY…PKKIDTLIFY (182 aa)) the chain is Cytoplasmic. The disordered stretch occupies residues 83 to 166 (YSSTPISIQN…LSSSDKNNTI (84 aa)). Residues 91-103 (QNNNNKNNNLPKQ) are compositionally biased toward low complexity. Polar residues predominate over residues 112–122 (INKNHNNYCNY). Over residues 123 to 144 (STSATSSSSSSSSFSSTNSGSS) the composition is skewed to low complexity. The segment covering 145–166 (YEYQQPQKNQQTLSSSDKNNTI) has biased composition (polar residues). The helical transmembrane segment at 220-240 (LSISDFIAVSGIIIEQLIIIF) threads the bilayer. At 241 to 255 (NKEISKSIGFCIGER) the chain is on the extracellular side. Residues 256–276 (VSIHFGLLATLFWSNCIAYYL) traverse the membrane as a helical segment. The Cytoplasmic portion of the chain corresponds to 277–289 (LRETYELKPYNIR). The chain crosses the membrane as a helical span at residues 290 to 310 (FVYFHIVCWGMALIGVASLFF). Over 311-334 (SKIITVSNIDQGGSWCSVSSSYQL) the chain is Extracellular. Residues 335-355 (YFWVIPLFVSFTWNLICYCLI) traverse the membrane as a helical segment. At 356-382 (YRKFNKIIGIYGIQSVQIKTIIIRKLS) the chain is on the cytoplasmic side. Residues 383–403 (FYLLAFLITWVWDVINNSIFL) traverse the membrane as a helical segment. Residues 404–410 (YEGKCPP) lie on the Extracellular side of the membrane. Residues 411 to 431 (FALWILQEFFSSGYGFFNSLA) traverse the membrane as a helical segment. Topologically, residues 432 to 442 (YAVTTRFYSRK) are cytoplasmic.

It belongs to the G-protein coupled receptor 5 family.

The protein resides in the membrane. In terms of biological role, receptor for cAMP. In Dictyostelium discoideum (Social amoeba), this protein is Cyclic AMP receptor-like protein B (crlB).